The following is a 365-amino-acid chain: Peptide chain release factor 1 (365 aa).

Position 240 is an N5-methylglutamine (glutamine 240).

It belongs to the prokaryotic/mitochondrial release factor family. Post-translationally, methylated by PrmC. Methylation increases the termination efficiency of RF1.

Its subcellular location is the cytoplasm. Functionally, peptide chain release factor 1 directs the termination of translation in response to the peptide chain termination codons UAG and UAA. In Bifidobacterium animalis subsp. lactis (strain AD011), this protein is Peptide chain release factor 1.